The primary structure comprises 390 residues: Heparan sulfate glucosamine 3-O-sulfotransferase 3B1 (390 aa).

The interval 1 to 25 (MGQRLSGGRSCLDVPGRFLPQPPPP) is disordered. At 1–32 (MGQRLSGGRSCLDVPGRFLPQPPPPPPPVRRK) the chain is on the cytoplasmic side. The chain crosses the membrane as a helical; Signal-anchor for type II membrane protein span at residues 33 to 53 (LALLFAMLCIWLYMFLYSCAG). The Lumenal portion of the chain corresponds to 54–390 (SCTAAPGLLL…QMTGRDFGWD (337 aa)). Positions 79–125 (TAPNETSPKMPFRAPPANSLAAGKDKTVGAGSQEEQSPEAPDSPSPI) are disordered. The N-linked (GlcNAc...) asparagine glycan is linked to Asn82. Position 147 to 151 (147 to 151 (KGGTR)) interacts with 3'-phosphoadenylyl sulfate. Substrate is bound by residues 169–175 (EPHFFDR) and 200–203 (KTPS). Residues Arg228 and Ser236 each coordinate 3'-phosphoadenylyl sulfate. A glycan (N-linked (GlcNAc...) asparagine) is linked at Asn258. 268-269 (WS) lines the substrate pocket. Residue Asn329 is glycosylated (N-linked (GlcNAc...) asparagine). A disulfide bridge links Cys336 with Cys348. 353 to 357 (KGRAH) provides a ligand contact to 3'-phosphoadenylyl sulfate.

This sequence belongs to the sulfotransferase 1 family.

It localises to the golgi apparatus membrane. The catalysed reaction is alpha-D-glucosaminyl-[heparan sulfate](n) + 3'-phosphoadenylyl sulfate = 3-sulfo-alpha-D-glucosaminyl-[heparan sulfate](n) + adenosine 3',5'-bisphosphate + H(+). Sulfotransferase that utilizes 3'-phospho-5'-adenylyl sulfate (PAPS) to catalyze the transfer of a sulfo group to an N-unsubstituted glucosamine linked to a 2-O-sulfo iduronic acid unit on heparan sulfate. Catalyzes the O-sulfation of glucosamine in IdoUA2S-GlcNS and also in IdoUA2S-GlcNH2. Unlike HS3ST1/3-OST-1, does not convert non-anticoagulant heparan sulfate to anticoagulant heparan sulfate. The protein is Heparan sulfate glucosamine 3-O-sulfotransferase 3B1 (Hs3st3b1) of Mus musculus (Mouse).